The chain runs to 417 residues: NADH-quinone oxidoreductase subunit D (417 aa).

Belongs to the complex I 49 kDa subunit family. As to quaternary structure, NDH-1 is composed of 14 different subunits. Subunits NuoB, C, D, E, F, and G constitute the peripheral sector of the complex.

Its subcellular location is the cell inner membrane. It catalyses the reaction a quinone + NADH + 5 H(+)(in) = a quinol + NAD(+) + 4 H(+)(out). Functionally, NDH-1 shuttles electrons from NADH, via FMN and iron-sulfur (Fe-S) centers, to quinones in the respiratory chain. The immediate electron acceptor for the enzyme in this species is believed to be ubiquinone. Couples the redox reaction to proton translocation (for every two electrons transferred, four hydrogen ions are translocated across the cytoplasmic membrane), and thus conserves the redox energy in a proton gradient. This Verminephrobacter eiseniae (strain EF01-2) protein is NADH-quinone oxidoreductase subunit D.